A 185-amino-acid polypeptide reads, in one-letter code: Large ribosomal subunit protein bL25 (185 aa).

This sequence belongs to the bacterial ribosomal protein bL25 family. CTC subfamily. Part of the 50S ribosomal subunit; part of the 5S rRNA/L5/L18/L25 subcomplex. Contacts the 5S rRNA. Binds to the 5S rRNA independently of L5 and L18.

Its function is as follows. This is one of the proteins that binds to the 5S RNA in the ribosome where it forms part of the central protuberance. This Chlamydia muridarum (strain MoPn / Nigg) protein is Large ribosomal subunit protein bL25.